A 192-amino-acid chain; its full sequence is Beta-glucosidase (192 aa).

This sequence belongs to the glycosyl hydrolase 3 family.

It carries out the reaction Hydrolysis of terminal, non-reducing beta-D-glucosyl residues with release of beta-D-glucose.. Its pathway is glycan metabolism; cellulose degradation. In Schizophyllum commune (Split gill fungus), this protein is Beta-glucosidase.